Reading from the N-terminus, the 156-residue chain is 6,7-dimethyl-8-ribityllumazine synthase (156 aa).

Residues Phe23, 57–59 (AYE), and 81–83 (AII) each bind 5-amino-6-(D-ribitylamino)uracil. 86–87 (ST) is a binding site for (2S)-2-hydroxy-3-oxobutyl phosphate. His89 acts as the Proton donor in catalysis. Phe114 serves as a coordination point for 5-amino-6-(D-ribitylamino)uracil. Arg128 serves as a coordination point for (2S)-2-hydroxy-3-oxobutyl phosphate.

Belongs to the DMRL synthase family.

It catalyses the reaction (2S)-2-hydroxy-3-oxobutyl phosphate + 5-amino-6-(D-ribitylamino)uracil = 6,7-dimethyl-8-(1-D-ribityl)lumazine + phosphate + 2 H2O + H(+). The protein operates within cofactor biosynthesis; riboflavin biosynthesis; riboflavin from 2-hydroxy-3-oxobutyl phosphate and 5-amino-6-(D-ribitylamino)uracil: step 1/2. Its function is as follows. Catalyzes the formation of 6,7-dimethyl-8-ribityllumazine by condensation of 5-amino-6-(D-ribitylamino)uracil with 3,4-dihydroxy-2-butanone 4-phosphate. This is the penultimate step in the biosynthesis of riboflavin. This chain is 6,7-dimethyl-8-ribityllumazine synthase, found in Campylobacter hominis (strain ATCC BAA-381 / DSM 21671 / CCUG 45161 / LMG 19568 / NCTC 13146 / CH001A).